The primary structure comprises 138 residues: MRTLWIVAVWLMGVEGNLFQFGNMINHMVGKHAVWSYLSYGCYCGWGGQGKPQDATDRCCFVHDCCYGRANGCDPKLSTYSYNFQNGNIVCGNKYGCLRHICECDRVAAICFQKNMNTYNKKYKNYSSSNCQENSDKC.

Positions 1–16 (MRTLWIVAVWLMGVEG) are cleaved as a signal peptide. Intrachain disulfides connect Cys-42-Cys-131, Cys-44-Cys-60, Cys-59-Cys-111, Cys-65-Cys-138, Cys-66-Cys-104, Cys-73-Cys-97, and Cys-91-Cys-102. Tyr-43, Gly-45, and Gly-47 together coordinate Ca(2+). The active site involves His-63. Ca(2+) is bound at residue Asp-64. Residue Asp-105 is part of the active site.

This sequence belongs to the phospholipase A2 family. Group II subfamily. D49 sub-subfamily. Requires Ca(2+) as cofactor. In terms of tissue distribution, expressed by the venom gland.

The protein localises to the secreted. It catalyses the reaction a 1,2-diacyl-sn-glycero-3-phosphocholine + H2O = a 1-acyl-sn-glycero-3-phosphocholine + a fatty acid + H(+). Snake venom phospholipase A2 (PLA2) that exhibits medium anticoagulant effects by binding to factor Xa (F10) and inhibiting the prothrombinase activity (IC(50) is 90 nM). PLA2 catalyzes the calcium-dependent hydrolysis of the 2-acyl groups in 3-sn-phosphoglycerides. This is Basic phospholipase A2 Pla2Vb from Vipera berus berus (Common viper).